The primary structure comprises 288 residues: Phosphatidylserine decarboxylase proenzyme (288 aa).

Active-site charge relay system; for autoendoproteolytic cleavage activity residues include aspartate 89, histidine 146, and serine 252. Serine 252 functions as the Schiff-base intermediate with substrate; via pyruvic acid; for decarboxylase activity in the catalytic mechanism. Serine 252 carries the pyruvic acid (Ser); by autocatalysis modification.

Belongs to the phosphatidylserine decarboxylase family. PSD-B subfamily. Prokaryotic type I sub-subfamily. Heterodimer of a large membrane-associated beta subunit and a small pyruvoyl-containing alpha subunit. The cofactor is pyruvate. Post-translationally, is synthesized initially as an inactive proenzyme. Formation of the active enzyme involves a self-maturation process in which the active site pyruvoyl group is generated from an internal serine residue via an autocatalytic post-translational modification. Two non-identical subunits are generated from the proenzyme in this reaction, and the pyruvate is formed at the N-terminus of the alpha chain, which is derived from the carboxyl end of the proenzyme. The autoendoproteolytic cleavage occurs by a canonical serine protease mechanism, in which the side chain hydroxyl group of the serine supplies its oxygen atom to form the C-terminus of the beta chain, while the remainder of the serine residue undergoes an oxidative deamination to produce ammonia and the pyruvoyl prosthetic group on the alpha chain. During this reaction, the Ser that is part of the protease active site of the proenzyme becomes the pyruvoyl prosthetic group, which constitutes an essential element of the active site of the mature decarboxylase.

The protein localises to the cell membrane. The catalysed reaction is a 1,2-diacyl-sn-glycero-3-phospho-L-serine + H(+) = a 1,2-diacyl-sn-glycero-3-phosphoethanolamine + CO2. It functions in the pathway phospholipid metabolism; phosphatidylethanolamine biosynthesis; phosphatidylethanolamine from CDP-diacylglycerol: step 2/2. Catalyzes the formation of phosphatidylethanolamine (PtdEtn) from phosphatidylserine (PtdSer). This is Phosphatidylserine decarboxylase proenzyme from Shewanella frigidimarina (strain NCIMB 400).